Consider the following 808-residue polypeptide: Phenylalanine--tRNA ligase beta subunit (808 aa).

Residues 40–157 (NKGATNVVVG…QSVEPGQDAL (118 aa)) form the tRNA-binding domain. Residues 411–486 (RSERVIALDL…RLYGYDELPS (76 aa)) form the B5 domain. Mg(2+) contacts are provided by D464, D470, E473, and E474. Residues 714 to 807 (PRYPAITRDM…VQKQTGAVLR (94 aa)) form the FDX-ACB domain.

It belongs to the phenylalanyl-tRNA synthetase beta subunit family. Type 1 subfamily. As to quaternary structure, tetramer of two alpha and two beta subunits. Requires Mg(2+) as cofactor.

Its subcellular location is the cytoplasm. It catalyses the reaction tRNA(Phe) + L-phenylalanine + ATP = L-phenylalanyl-tRNA(Phe) + AMP + diphosphate + H(+). This is Phenylalanine--tRNA ligase beta subunit from Shouchella clausii (strain KSM-K16) (Alkalihalobacillus clausii).